The following is a 413-amino-acid chain: Serine hydroxymethyltransferase (413 aa).

Residues leucine 120 and 124-126 each bind (6S)-5,6,7,8-tetrahydrofolate; that span reads GHL. Lysine 228 is modified (N6-(pyridoxal phosphate)lysine).

The protein belongs to the SHMT family. Homodimer. Pyridoxal 5'-phosphate serves as cofactor.

Its subcellular location is the cytoplasm. The enzyme catalyses (6R)-5,10-methylene-5,6,7,8-tetrahydrofolate + glycine + H2O = (6S)-5,6,7,8-tetrahydrofolate + L-serine. It functions in the pathway one-carbon metabolism; tetrahydrofolate interconversion. Its pathway is amino-acid biosynthesis; glycine biosynthesis; glycine from L-serine: step 1/1. Functionally, catalyzes the reversible interconversion of serine and glycine with tetrahydrofolate (THF) serving as the one-carbon carrier. This reaction serves as the major source of one-carbon groups required for the biosynthesis of purines, thymidylate, methionine, and other important biomolecules. Also exhibits THF-independent aldolase activity toward beta-hydroxyamino acids, producing glycine and aldehydes, via a retro-aldol mechanism. The polypeptide is Serine hydroxymethyltransferase (Agathobacter rectalis (strain ATCC 33656 / DSM 3377 / JCM 17463 / KCTC 5835 / VPI 0990) (Eubacterium rectale)).